The primary structure comprises 910 residues: Myelin regulatory factor-like protein (910 aa).

The segment at residues 142–405 is a DNA-binding region (NDT80); that stretch reads GCSYPQQPLC…SNPGQFENDS (264 aa). The segment at 189–208 is disordered; it reads RSRSSEVQDPDSEGQNRMPT. The region spanning 451 to 559 is the Peptidase S74 domain; it reads SDSRAKQNIQ…KLTNNLEERI (109 aa). A coiled-coil region spans residues 543–575; it reads GAVKQLCKLTNNLEERIEELEIWNRKLARLKRL. Residues 628–648 form a helical membrane-spanning segment; that stretch reads LVITLIAVMAFCALTIVALYI. The segment at 661–682 is disordered; that stretch reads LPPSNITSSQEPALLPTASSSA. The segment covering 663-682 has biased composition (polar residues); it reads PSNITSSQEPALLPTASSSA.

The protein belongs to the MRF family.

The protein localises to the membrane. This is Myelin regulatory factor-like protein (MYRFL) from Homo sapiens (Human).